The primary structure comprises 563 residues: NAD(P)H-quinone oxidoreductase chain 4 (563 aa).

Transmembrane regions (helical) follow at residues Phe25–Ile45, Trp56–Gly76, Val90–Pro110, Leu111–Phe131, Pro133–Val153, Leu157–Trp177, Phe189–Phe209, Gly230–Val250, Thr264–Met284, Phe298–Phe318, Met335–Leu355, Gln356–Asp376, Phe397–Val417, Ile438–Met458, and Val485–Met505.

Belongs to the complex I subunit 4 family.

It is found in the cellular thylakoid membrane. It carries out the reaction a plastoquinone + NADH + (n+1) H(+)(in) = a plastoquinol + NAD(+) + n H(+)(out). It catalyses the reaction a plastoquinone + NADPH + (n+1) H(+)(in) = a plastoquinol + NADP(+) + n H(+)(out). Its function is as follows. NDH-1 shuttles electrons from NAD(P)H, via FMN and iron-sulfur (Fe-S) centers, to quinones in the respiratory chain. The immediate electron acceptor for the enzyme in this species is believed to be plastoquinone. Couples the redox reaction to proton translocation (for every two electrons transferred, four hydrogen ions are translocated across the cytoplasmic membrane), and thus conserves the redox energy in a proton gradient. The polypeptide is NAD(P)H-quinone oxidoreductase chain 4 (Prochlorococcus marinus (strain MIT 9313)).